Consider the following 245-residue polypeptide: tRNA (guanine-N(1)-)-methyltransferase (245 aa).

S-adenosyl-L-methionine is bound by residues Gly-114 and Ile-133 to Leu-138.

This sequence belongs to the RNA methyltransferase TrmD family. In terms of assembly, homodimer.

It is found in the cytoplasm. The catalysed reaction is guanosine(37) in tRNA + S-adenosyl-L-methionine = N(1)-methylguanosine(37) in tRNA + S-adenosyl-L-homocysteine + H(+). Its function is as follows. Specifically methylates guanosine-37 in various tRNAs. The protein is tRNA (guanine-N(1)-)-methyltransferase of Prochlorococcus marinus (strain MIT 9312).